Reading from the N-terminus, the 261-residue chain is UPF0328 protein ECU02_0020/ECU04_1700 (261 aa).

Positions 1–20 are disordered; the sequence is MSITSIPQPHETNEQHHTEI. Residues 11–20 show a composition bias toward basic and acidic residues; it reads ETNEQHHTEI.

This sequence belongs to the UPF0328 family.

The chain is UPF0328 protein ECU02_0020/ECU04_1700 from Encephalitozoon cuniculi (strain GB-M1) (Microsporidian parasite).